Here is a 669-residue protein sequence, read N- to C-terminus: DNA mismatch repair protein MutL (669 aa).

Basic and acidic residues predominate over residues 356 to 371; that stretch reads FEQRQNTENKQEKTFS. The disordered stretch occupies residues 356–379; sequence FEQRQNTENKQEKTFSSEESNSKP.

This sequence belongs to the DNA mismatch repair MutL/HexB family.

Its function is as follows. This protein is involved in the repair of mismatches in DNA. It is required for dam-dependent methyl-directed DNA mismatch repair. May act as a 'molecular matchmaker', a protein that promotes the formation of a stable complex between two or more DNA-binding proteins in an ATP-dependent manner without itself being part of a final effector complex. This chain is DNA mismatch repair protein MutL, found in Staphylococcus aureus (strain MRSA252).